A 327-amino-acid polypeptide reads, in one-letter code: Spermidine/putrescine import ATP-binding protein PotA (327 aa).

The 231-residue stretch at 5–235 folds into the ABC transporter domain; that stretch reads IKVEAVEKHF…PKTLFVATFI (231 aa). 37–44 contacts ATP; it reads GPSGCGKT.

The protein belongs to the ABC transporter superfamily. Spermidine/putrescine importer (TC 3.A.1.11.1) family. As to quaternary structure, the complex is composed of two ATP-binding proteins (PotA), two transmembrane proteins (PotB and PotC) and a solute-binding protein (PotD).

The protein resides in the cell membrane. The catalysed reaction is ATP + H2O + polyamine-[polyamine-binding protein]Side 1 = ADP + phosphate + polyamineSide 2 + [polyamine-binding protein]Side 1.. Its function is as follows. Part of the ABC transporter complex PotABCD involved in spermidine/putrescine import. Responsible for energy coupling to the transport system. The chain is Spermidine/putrescine import ATP-binding protein PotA from Bacillus anthracis.